The primary structure comprises 299 residues: MKRQLEAYCAHLRNERQVSEHTLLGYRRDLEKVIAYCKEHGIAEWQALQIQQLRQLIARLHHHGQSPRSLARLLSAVRGLYRYLNREGLCQHDPATGLSAPKGERRLPKVLDTDRALQLLDGGVDDDFIARRDQAILELFYSSGLRLSELTNLDLDHLDLAAGLVQVLGKGGKARVLPVGRKAREALQAWYRLRGIGNPRDRAVFITRQGNRISPQAVRLRVKAAGERELGQHLHPHMLRHSFASHVLESSQDLRAVQEMLGHADISTTQIYTHLDFQHLAAVYDSAHPRAKRSKGTDS.

The 85-residue stretch at 1–85 (MKRQLEAYCA…AVRGLYRYLN (85 aa)) folds into the Core-binding (CB) domain. Residues 106-285 (RLPKVLDTDR…DFQHLAAVYD (180 aa)) form the Tyr recombinase domain. Active-site residues include R146, K170, H237, R240, and H263. Y272 acts as the O-(3'-phospho-DNA)-tyrosine intermediate in catalysis.

The protein belongs to the 'phage' integrase family. XerC subfamily. Forms a cyclic heterotetrameric complex composed of two molecules of XerC and two molecules of XerD.

Its subcellular location is the cytoplasm. Functionally, site-specific tyrosine recombinase, which acts by catalyzing the cutting and rejoining of the recombining DNA molecules. The XerC-XerD complex is essential to convert dimers of the bacterial chromosome into monomers to permit their segregation at cell division. It also contributes to the segregational stability of plasmids. This Pseudomonas putida (strain ATCC 700007 / DSM 6899 / JCM 31910 / BCRC 17059 / LMG 24140 / F1) protein is Tyrosine recombinase XerC.